Consider the following 119-residue polypeptide: Large ribosomal subunit protein bL20 (119 aa).

This sequence belongs to the bacterial ribosomal protein bL20 family.

Binds directly to 23S ribosomal RNA and is necessary for the in vitro assembly process of the 50S ribosomal subunit. It is not involved in the protein synthesizing functions of that subunit. The sequence is that of Large ribosomal subunit protein bL20 from Rhodopseudomonas palustris (strain BisB5).